The primary structure comprises 369 residues: Serine/threonine-protein acetyltransferase HopZ1a (369 aa).

Residues 1–46 (MGNVCVGGSRMSHQVYSPDRADTPPRSERNTPDRRQRAAGDAERTQ) are disordered. The span at 19–46 (DRADTPPRSERNTPDRRQRAAGDAERTQ) shows a compositional bias: basic and acidic residues. 1D-myo-inositol hexakisphosphate contacts are provided by Arg49, Lys53, and Arg106. Catalysis depends on residues His150 and Glu170. Residue His150 coordinates CoA. CoA-binding positions include Ala177 and 211–212 (KT). Cys216 is a catalytic residue. 1D-myo-inositol hexakisphosphate contacts are provided by residues Asn222, 226–229 (KAHK), and 289–290 (KH). Lys289 is subject to N6-acetyllysine; by autocatalysis. 292 to 295 (ASLT) serves as a coordination point for CoA. 1D-myo-inositol hexakisphosphate-binding positions include 314–317 (SEGH) and Arg326. Residues 331-334 (RVKR) and 344-348 (SNTQF) each bind CoA. Residues Gln358 and Arg362 each contribute to the 1D-myo-inositol hexakisphosphate site.

It belongs to the acetyltransferase YopJ family. As to quaternary structure, interacts with host plant JAZ proteins (e.g. Glycine max JAZ1 and Arabidospis thaliana TIFY10B/JAZ2, TIFY11A/JAZ5, TIFY11B/JAZ6, TIFY5A/JAZ8 and TIFY3B/JAZ12) and triggers their degradation. Binds directly to SZE1 and SZE2 at the host plasma membrane; this interaction with a complex made of, at least, SZE1, BKN2/SZE2, ZAR1 and ZED1 triggers host immunity. Requires 1D-myo-inositol hexakisphosphate as cofactor. Autoacetylated at Lys-289; while autoacetylation at Lys-289 is required for virulence function to some extent, it is not essential.

It is found in the secreted. The protein resides in the host cell membrane. The protein localises to the host cytoplasm. Its subcellular location is the host cytoskeleton. It localises to the host nucleus. The enzyme catalyses L-threonyl-[protein] + acetyl-CoA = O-acetyl-L-threonyl-[protein] + CoA. It carries out the reaction L-seryl-[protein] + acetyl-CoA = O-acetyl-L-seryl-[protein] + CoA. The catalysed reaction is L-lysyl-[protein] + acetyl-CoA = N(6)-acetyl-L-lysyl-[protein] + CoA + H(+). 1D-myo-inositol hexakisphosphate activates protein-acetyltransferase activity via an allosteric mechanism: 1D-myo-inositol hexakisphosphate-binding induces a conformational rearrangement that stimulates the interaction with acetyl-CoA. Acetyltransferase activity is activated by phytic acid. Serine/threonine-protein acetyltransferase translocated into infected cells, which impairs host microtubule network and host immunity by mediating acetylation of target proteins. Blocks secretion in host cells by mediating acetylation of host tubulin, thereby impairing host microbubule network. Impairs host cell immunity by mediating acetylation of host TIFY/JAZ transcription repressors (Arabidopsis thaliana TIFY10B/JAZ2, TIFY11A/JAZ5, TIFY11B/JAZ6, TIFY5A/JAZ8, TIFY9/JAZ10 and TIFY3B/JAZ12), thereby activating host jasmonate signaling. The chain is Serine/threonine-protein acetyltransferase HopZ1a from Pseudomonas syringae pv. syringae.